Consider the following 445-residue polypeptide: 8-amino-7-oxononanoate synthase (445 aa).

Residue R40 coordinates substrate. Residue 131-132 (GY) participates in pyridoxal 5'-phosphate binding. Residue H156 coordinates substrate. Pyridoxal 5'-phosphate is bound by residues S202, H230, and T258. K261 is modified (N6-(pyridoxal phosphate)lysine). T377 lines the substrate pocket. The disordered stretch occupies residues 408-445 (ASEGQTRRDAEQPPRSLRSLPPEGAAASLGAARRETAA).

This sequence belongs to the class-II pyridoxal-phosphate-dependent aminotransferase family. BioF subfamily. As to quaternary structure, homodimer. Pyridoxal 5'-phosphate is required as a cofactor.

It carries out the reaction 6-carboxyhexanoyl-[ACP] + L-alanine + H(+) = (8S)-8-amino-7-oxononanoate + holo-[ACP] + CO2. The protein operates within cofactor biosynthesis; biotin biosynthesis. Functionally, catalyzes the decarboxylative condensation of pimeloyl-[acyl-carrier protein] and L-alanine to produce 8-amino-7-oxononanoate (AON), [acyl-carrier protein], and carbon dioxide. This chain is 8-amino-7-oxononanoate synthase, found in Burkholderia ambifaria (strain MC40-6).